The chain runs to 132 residues: Small ribosomal subunit protein uS8 (132 aa).

Belongs to the universal ribosomal protein uS8 family. As to quaternary structure, part of the 30S ribosomal subunit. Contacts proteins S5 and S12.

In terms of biological role, one of the primary rRNA binding proteins, it binds directly to 16S rRNA central domain where it helps coordinate assembly of the platform of the 30S subunit. In Streptococcus equi subsp. equi (strain 4047), this protein is Small ribosomal subunit protein uS8.